We begin with the raw amino-acid sequence, 1942 residues long: Myosin-2 (1942 aa).

The Myosin N-terminal SH3-like domain occupies 33–82 (DAKTSVFVAEPKESFVKGTIQSKDAGKVTVKTEAGATLTVKEDQIFPMNP). 2 positions are modified to phosphothreonine: threonine 64 and threonine 69. Residues 86 to 785 (DKIEDMAMMT…LLGLLEEMRD (700 aa)) form the Myosin motor domain. 179–186 (GESGAGKT) contacts ATP. Residue tyrosine 389 is modified to Phosphotyrosine. Position 419 is a phosphothreonine (threonine 419). Serine 625 is modified (phosphoserine). The tract at residues 662-684 (LNKLMTNLRSTHPHFVRCIIPNE) is actin-binding. At histidine 760 the chain carries Pros-methylhistidine. One can recognise an IQ domain in the interval 788–817 (LAQLITRTQAMCRGFLARVEYQKMVERRES). A coiled-coil region spans residues 849–1930 (SAETEKEMAT…ESQVNKLRVK (1082 aa)). Serine 1095 and serine 1099 each carry phosphoserine. The disordered stretch occupies residues 1130 to 1175 (EAERASRAKAEKQRSDLSRELEEISERLEEAGGATSAQIEMNKKRE). Positions 1131–1159 (AERASRAKAEKQRSDLSRELEEISERLEE) are enriched in basic and acidic residues. A phosphoserine mark is found at serine 1165 and serine 1240. Phosphothreonine is present on threonine 1244. The residue at position 1246 (serine 1246) is a Phosphoserine. Residue threonine 1258 is modified to Phosphothreonine. A Phosphoserine modification is found at serine 1264. Residue threonine 1289 is modified to Phosphothreonine. Serine 1291, serine 1295, serine 1306, and serine 1309 each carry phosphoserine. Tyrosine 1467 bears the Phosphotyrosine mark. At threonine 1470 the chain carries Phosphothreonine. Serine 1477 bears the Phosphoserine mark. Tyrosine 1495 is subject to Phosphotyrosine. At serine 1498 the chain carries Phosphoserine. Residue threonine 1504 is modified to Phosphothreonine. Serine 1517 is modified (phosphoserine). Threonine 1520 bears the Phosphothreonine mark. 6 positions are modified to phosphoserine: serine 1557, serine 1577, serine 1603, serine 1606, serine 1717, and serine 1729. 2 positions are modified to phosphothreonine: threonine 1733 and threonine 1739. At serine 1742 the chain carries Phosphoserine.

The protein belongs to the TRAFAC class myosin-kinesin ATPase superfamily. Myosin family. In terms of assembly, muscle myosin is a hexameric protein that consists of 2 heavy chain subunits (MHC), 2 alkali light chain subunits (MLC) and 2 regulatory light chain subunits (MLC-2). Interacts with GCSAM. Expressed in type 2a myofibers in the tibialis anterior and soleus muscles (at protein level).

It is found in the cytoplasm. It localises to the myofibril. Functionally, myosins are actin-based motor molecules with ATPase activity essential for muscle contraction. The polypeptide is Myosin-2 (Mus musculus (Mouse)).